The following is an 81-amino-acid chain: Cytotoxin 8 (81 aa).

Residues 1-21 form the signal peptide; sequence MKTLLLTLVVVTIVCLDLGYT. Intrachain disulfides connect C24-C42, C35-C59, C63-C74, and C75-C80.

It belongs to the three-finger toxin family. Short-chain subfamily. Type IA cytotoxin sub-subfamily. As to quaternary structure, monomer in solution; Homodimer and oligomer in the presence of negatively charged lipids forming a pore with a size ranging between 20 and 30 Angstroms. Expressed by the venom gland.

The protein resides in the secreted. The protein localises to the target cell membrane. In terms of biological role, shows cytolytic activity on many different cells by forming pore in lipid membranes. In vivo, increases heart rate or kills the animal by cardiac arrest. In addition, it binds to heparin with high affinity, interacts with Kv channel-interacting protein 1 (KCNIP1) in a calcium-independent manner, and binds to integrin alpha-V/beta-3 (ITGAV/ITGB3) with moderate affinity. In Naja atra (Chinese cobra), this protein is Cytotoxin 8.